Consider the following 218-residue polypeptide: MAPHQFKSKGAPTLVHVREAARFDRDGLIPAVVQDVLDGTVLMVAWMNREALERTLETGESWFWSRSRQELWHKGATSGHRQKIKALRYDCDSDVLLLTVEQQGDIACHLGERSCFHRDEAGDYDLPPADTLSQVFRVVEERKAHPHPDSYTSRLLEAGSNKILKKIGEEATEVVMAAKDGERVAEEVADLWYHTLVLLAHADVDILDVYRALQQRRR.

Positions 1–131 (MAPHQFKSKG…GDYDLPPADT (131 aa)) are phosphoribosyl-AMP cyclohydrolase. The tract at residues 132 to 218 (LSQVFRVVEE…VYRALQQRRR (87 aa)) is phosphoribosyl-ATP pyrophosphohydrolase.

In the N-terminal section; belongs to the PRA-CH family. It in the C-terminal section; belongs to the PRA-PH family.

Its subcellular location is the cytoplasm. It catalyses the reaction 1-(5-phospho-beta-D-ribosyl)-ATP + H2O = 1-(5-phospho-beta-D-ribosyl)-5'-AMP + diphosphate + H(+). It carries out the reaction 1-(5-phospho-beta-D-ribosyl)-5'-AMP + H2O = 1-(5-phospho-beta-D-ribosyl)-5-[(5-phospho-beta-D-ribosylamino)methylideneamino]imidazole-4-carboxamide. Its pathway is amino-acid biosynthesis; L-histidine biosynthesis; L-histidine from 5-phospho-alpha-D-ribose 1-diphosphate: step 2/9. It participates in amino-acid biosynthesis; L-histidine biosynthesis; L-histidine from 5-phospho-alpha-D-ribose 1-diphosphate: step 3/9. This is Histidine biosynthesis bifunctional protein HisIE from Gloeobacter violaceus (strain ATCC 29082 / PCC 7421).